The following is a 91-amino-acid chain: Molybdopterin synthase sulfur carrier subunit (91 aa).

At G91 the chain carries 1-thioglycine; alternate. G91 is modified (glycyl adenylate; alternate).

Belongs to the MoaD family. MOCS2A subfamily. In terms of assembly, heterotetramer; composed of 2 small (MOCS2A) and 2 large (MOCS2B) subunits. Post-translationally, C-terminal thiocarboxylation occurs in 2 steps, it is first acyl-adenylated (-COAMP) via the hesA/moeB/thiF part of MOCS3, then thiocarboxylated (-COSH) via the rhodanese domain of MOCS3.

The protein localises to the cytoplasm. It participates in cofactor biosynthesis; molybdopterin biosynthesis. Functionally, acts as a sulfur carrier required for molybdopterin biosynthesis. Component of the molybdopterin synthase complex that catalyzes the conversion of precursor Z into molybdopterin by mediating the incorporation of 2 sulfur atoms into precursor Z to generate a dithiolene group. In the complex, serves as sulfur donor by being thiocarboxylated (-COSH) at its C-terminus by MOCS3. After interaction with MOCS2B, the sulfur is then transferred to precursor Z to form molybdopterin. The polypeptide is Molybdopterin synthase sulfur carrier subunit (Anopheles gambiae (African malaria mosquito)).